The following is a 610-amino-acid chain: UvrABC system protein C (610 aa).

One can recognise a GIY-YIG domain in the interval 16–94 (SQPGVYRMYD…IKLYQPRYNV (79 aa)). The 36-residue stretch at 204-239 (DQVLTQLISRMETASQNLEFEEAARIRDQIQAVRRV) folds into the UVR domain.

Belongs to the UvrC family. In terms of assembly, interacts with UvrB in an incision complex.

Its subcellular location is the cytoplasm. Functionally, the UvrABC repair system catalyzes the recognition and processing of DNA lesions. UvrC both incises the 5' and 3' sides of the lesion. The N-terminal half is responsible for the 3' incision and the C-terminal half is responsible for the 5' incision. The protein is UvrABC system protein C of Escherichia coli O139:H28 (strain E24377A / ETEC).